The chain runs to 546 residues: Carboxypeptidase Y homolog A (546 aa).

A signal peptide spans 1-17 (MKLLASTVLMGAAAASI). A propeptide spanning residues 18–132 (APQQQVLKNP…KLEKYNMRAK (115 aa)) is cleaved from the precursor. 5 disulfides stabilise this stretch: Cys186–Cys426, Cys320–Cys334, Cys344–Cys367, Cys351–Cys360, and Cys389–Cys396. An N-linked (GlcNAc...) asparagine glycan is attached at Asn217. Residue Ser273 is part of the active site. The active site involves Asp465. The N-linked (GlcNAc...) asparagine glycan is linked to Asn512. His523 is a catalytic residue.

Belongs to the peptidase S10 family.

Its subcellular location is the vacuole. The enzyme catalyses Release of a C-terminal amino acid with broad specificity.. Vacuolar carboxypeptidase involved in degradation of small peptides. Digests preferentially peptides containing an aliphatic or hydrophobic residue in P1' position, as well as methionine, leucine or phenylalanine in P1 position of ester substrate. This Sclerotinia sclerotiorum (strain ATCC 18683 / 1980 / Ss-1) (White mold) protein is Carboxypeptidase Y homolog A (cpyA).